Reading from the N-terminus, the 396-residue chain is Squamosa promoter-binding-like protein 10 (396 aa).

The segment at 74-104 (QSTSINSSSPEDKRCNLASQSSPGDSSSNID) is disordered. The segment covering 90–104 (LASQSSPGDSSSNID) has biased composition (polar residues). An SBP-type zinc finger spans residues 173–250 (VPRCQIDGCE…SHHNARRRKP (78 aa)). Zn(2+)-binding residues include cysteine 176, cysteine 181, cysteine 198, histidine 201, cysteine 217, cysteine 220, histidine 224, and cysteine 236. Positions 233–249 (KRSCRKRLSHHNARRRK) match the Bipartite nuclear localization signal motif.

Zn(2+) serves as cofactor.

It localises to the nucleus. Trans-acting factor that binds specifically to the consensus nucleotide sequence 5'-TNCGTACAA-3'. In Arabidopsis thaliana (Mouse-ear cress), this protein is Squamosa promoter-binding-like protein 10 (SPL10).